A 64-amino-acid polypeptide reads, in one-letter code: Disintegrin VB7A (64 aa).

The Disintegrin domain occupies 1–64; it reads NSGNPCCDPV…SDCPRNPYKD (64 aa). Disulfide bonds link C6-C29, C20-C26, C25-C50, and C38-C57. The short motif at 42–44 is the Cell attachment site element; it reads RGD.

This sequence belongs to the disintegrin family. Dimeric disintegrin subfamily. Heterodimer with VB7B; disulfide-linked. In terms of tissue distribution, expressed by the venom gland.

The protein localises to the secreted. Poor inhibitor of platelet aggregation. The disintegrin inhibits the adhesion of cells expressing the RGD-dependent integrin alpha-5/beta-1 (ITGA5/ITGB1) to immobilized fibronectin. Inhibition on alpha-2b/beta-3 (ITGA2B/ITGB3) is low. The sequence is that of Disintegrin VB7A from Vipera berus berus (Common viper).